A 264-amino-acid chain; its full sequence is Cell cycle regulator CcrZ (264 aa).

The ATP site is built by Phe32, Trp70, and Gly73. Positions 157 to 164 (HGDVRHSN) match the Brenner's motif [HXDhX3N] motif. Residue Asp159 is the Proton acceptor of the active site. The APH signature appears at 173 to 196 (IYLVDWDSVRLTDRMFDVAHMLCH).

It belongs to the aminoglycoside phosphotransferase family. In terms of assembly, monomer in solution. Interacts with DnaA (via domains I (1-82) and III (111-326)). Interacts with DnaB. Interacts with FtsZ; the interaction is direct and ensures correct localization during the cell cycle.

Its subcellular location is the cytoplasm. It catalyses the reaction D-ribose + ATP = D-ribose 5-phosphate + ADP + H(+). It carries out the reaction 2-deoxy-D-ribose + ATP = 2-deoxy-D-ribose 5-phosphate + ADP + H(+). Functionally, plays a role in cell cycle regulation and chromosome integrity. Activates DnaA-dependent chromosomal DNA replication initiation ensuring that the chromosome is replicated at the right time during the cell cycle. May regulate replication initiation through phosphorylation of a possible second messenger or metabolite, and by interacting with replication initiation proteins. Has ATPase activity with D-ribose and 2-deoxy-D-ribose in vitro, but not with choline. Involved in DNA damage response. This chain is Cell cycle regulator CcrZ, found in Streptococcus pneumoniae serotype 2 (strain D39 / NCTC 7466).